A 499-amino-acid chain; its full sequence is Pyruvate kinase (499 aa).

Residue arginine 50 coordinates substrate. K(+)-binding residues include asparagine 52, serine 54, aspartate 84, and threonine 85. Position 52–55 (52–55) interacts with ATP; it reads NFSH. Arginine 91 is a binding site for ATP. Glutamate 241 contacts Mg(2+). Glycine 264, aspartate 265, and threonine 297 together coordinate substrate. Aspartate 265 contributes to the Mg(2+) binding site.

Belongs to the pyruvate kinase family. As to quaternary structure, homotetramer. Mg(2+) is required as a cofactor. It depends on K(+) as a cofactor.

The catalysed reaction is pyruvate + ATP = phosphoenolpyruvate + ADP + H(+). Its pathway is carbohydrate degradation; glycolysis; pyruvate from D-glyceraldehyde 3-phosphate: step 5/5. Activated by fructose 2,6-bisphosphate, activated by the effector in a non cooperative manner. The polypeptide is Pyruvate kinase (PYK) (Leishmania mexicana).